A 1072-amino-acid chain; its full sequence is DNA-directed RNA polymerase subunit beta (1072 aa).

Belongs to the RNA polymerase beta chain family. In plastids the minimal PEP RNA polymerase catalytic core is composed of four subunits: alpha, beta, beta', and beta''. When a (nuclear-encoded) sigma factor is associated with the core the holoenzyme is formed, which can initiate transcription.

The protein resides in the plastid. It localises to the chloroplast. The catalysed reaction is RNA(n) + a ribonucleoside 5'-triphosphate = RNA(n+1) + diphosphate. Its function is as follows. DNA-dependent RNA polymerase catalyzes the transcription of DNA into RNA using the four ribonucleoside triphosphates as substrates. This Draba nemorosa (Woodland whitlowgrass) protein is DNA-directed RNA polymerase subunit beta.